Reading from the N-terminus, the 376-residue chain is Cytochrome b (376 aa).

4 helical membrane-spanning segments follow: residues 28 to 48 (YGFLLGIIFFIQILTGVFLAS), 72 to 94 (WCFRYMHATGASLVFFLTYLHIL), 107 to 127 (SWISGLIIFALFIVTAFIGYV), and 169 to 189 (FFVLHFILPFVALCIVFIHIF). Residues H78 and H92 each contribute to the heme b site. Heme b is bound by residues H173 and H187. Residue H192 participates in a ubiquinone binding. 4 helical membrane-spanning segments follow: residues 214–234 (LLSLDVKGFNNILILFLIQSI), 274–294 (IPSKNAGLVIVIASLQLLFLL), 317–337 (VPIIWFMCSFYALLWIGCPLP), and 340–360 (IFILYGRLFIILFFSSGLFSL).

Belongs to the cytochrome b family. As to quaternary structure, the main subunits of complex b-c1 are: cytochrome b, cytochrome c1 and the Rieske protein. Heme b is required as a cofactor.

It is found in the mitochondrion inner membrane. Functionally, component of the ubiquinol-cytochrome c reductase complex (complex III or cytochrome b-c1 complex) that is part of the mitochondrial respiratory chain. The b-c1 complex mediates electron transfer from ubiquinol to cytochrome c. Contributes to the generation of a proton gradient across the mitochondrial membrane that is then used for ATP synthesis. This chain is Cytochrome b (MT-CYB), found in Plasmodium berghei.